The following is a 356-amino-acid chain: Red-sensitive opsin-2 (356 aa).

At 1 to 48 the chain is on the extracellular side; sequence MAEWANAAFAARRRGDETTRDNAFSYTNSNNTRDPFEGPNYHIAPRWV. The N-linked (GlcNAc...) asparagine glycan is linked to Asn-30. The helical transmembrane segment at 49 to 73 threads the bilayer; that stretch reads YNVATVWMFFVVVASTFTNGLVLVA. At 74 to 85 the chain is on the cytoplasmic side; sequence TAKFKKLRHPLN. Residues 86–111 form a helical membrane-spanning segment; sequence WILVNLAIADLGETLFASTISVINQV. Residues 112–125 lie on the Extracellular side of the membrane; it reads FGYFILGHPMCIFE. Residues Cys-122 and Cys-199 are joined by a disulfide bond. Residues 126–145 form a helical membrane-spanning segment; that stretch reads GYTVSVCGIAGLWSLTVISW. Residues 146–164 are Cytoplasmic-facing; that stretch reads ERWVVVCKPFGNVKFDGKW. The helical transmembrane segment at 165 to 188 threads the bilayer; it reads ASAGIIFSWVWAAVWCAPPIFGWS. At 189 to 214 the chain is on the extracellular side; it reads RYWPHGLKTSCGPDVFGGNEDPGVQS. The helical transmembrane segment at 215–242 threads the bilayer; sequence YMLVLMITCCILPLAIIILCYIAVFLAI. The Cytoplasmic segment spans residues 243-264; that stretch reads HAVAQQQKDSESTQKAEKEVSR. A helical membrane pass occupies residues 265 to 288; sequence MVVVMILAFCLCWGPYTAFACFAA. At 289 to 296 the chain is on the extracellular side; sequence ANPGYAFH. A helical transmembrane segment spans residues 297 to 321; the sequence is PLAAAMPAYFAKSATIYNPIIYVFM. Lys-308 bears the N6-(retinylidene)lysine mark. Residues 322-356 are Cytoplasmic-facing; sequence NRQFRVCIMQLFGKKVDDGSEVSTSKTEVSSVAPA.

This sequence belongs to the G-protein coupled receptor 1 family. Opsin subfamily. In terms of processing, phosphorylated on some or all of the serine and threonine residues present in the C-terminal region.

It is found in the membrane. In terms of biological role, visual pigments are the light-absorbing molecules that mediate vision. They consist of an apoprotein, opsin, covalently linked to cis-retinal. The sequence is that of Red-sensitive opsin-2 (opn1lw2) from Danio rerio (Zebrafish).